Here is a 618-residue protein sequence, read N- to C-terminus: 1-deoxy-D-xylulose-5-phosphate synthase (618 aa).

Residues H73 and 114–116 contribute to the thiamine diphosphate site; that span reads GHS. Residue D145 coordinates Mg(2+). Residues 146-147, N174, Y284, and E364 each bind thiamine diphosphate; that span reads GA. N174 provides a ligand contact to Mg(2+).

It belongs to the transketolase family. DXPS subfamily. Homodimer. Mg(2+) serves as cofactor. Requires thiamine diphosphate as cofactor.

It catalyses the reaction D-glyceraldehyde 3-phosphate + pyruvate + H(+) = 1-deoxy-D-xylulose 5-phosphate + CO2. It participates in metabolic intermediate biosynthesis; 1-deoxy-D-xylulose 5-phosphate biosynthesis; 1-deoxy-D-xylulose 5-phosphate from D-glyceraldehyde 3-phosphate and pyruvate: step 1/1. Its function is as follows. Catalyzes the acyloin condensation reaction between C atoms 2 and 3 of pyruvate and glyceraldehyde 3-phosphate to yield 1-deoxy-D-xylulose-5-phosphate (DXP). The polypeptide is 1-deoxy-D-xylulose-5-phosphate synthase (Clostridium beijerinckii (strain ATCC 51743 / NCIMB 8052) (Clostridium acetobutylicum)).